A 345-amino-acid chain; its full sequence is Myb/SANT-like DNA-binding domain-containing protein 4 (345 aa).

The Myb-like domain occupies 4-77 (LKRKRKSNFS…EVKRRYLDWR (74 aa)). Residue lysine 9 forms a Glycyl lysine isopeptide (Lys-Gly) (interchain with G-Cter in SUMO2) linkage. Serine 106 bears the Phosphoserine mark. Glycyl lysine isopeptide (Lys-Gly) (interchain with G-Cter in SUMO2) cross-links involve residues lysine 114 and lysine 142. The interval 139–175 (TEVKVEEEERDPQSPEFEIEEEEEMLSSVIPDSRREN) is disordered. Threonine 188 is modified (phosphothreonine). Positions 202–344 (HLLMNIEKQK…RLRIQKEGHL (143 aa)) form a coiled coil. Residues lysine 237, lysine 254, and lysine 273 each participate in a glycyl lysine isopeptide (Lys-Gly) (interchain with G-Cter in SUMO2) cross-link.

This Mus musculus (Mouse) protein is Myb/SANT-like DNA-binding domain-containing protein 4 (Msantd4).